A 238-amino-acid polypeptide reads, in one-letter code: Ribonuclease PH (238 aa).

Phosphate contacts are provided by residues R86 and 124–126 (GTR).

It belongs to the RNase PH family. Homohexameric ring arranged as a trimer of dimers.

The catalysed reaction is tRNA(n+1) + phosphate = tRNA(n) + a ribonucleoside 5'-diphosphate. Functionally, phosphorolytic 3'-5' exoribonuclease that plays an important role in tRNA 3'-end maturation. Removes nucleotide residues following the 3'-CCA terminus of tRNAs; can also add nucleotides to the ends of RNA molecules by using nucleoside diphosphates as substrates, but this may not be physiologically important. Probably plays a role in initiation of 16S rRNA degradation (leading to ribosome degradation) during starvation. This Mannheimia haemolytica (Pasteurella haemolytica) protein is Ribonuclease PH.